A 268-amino-acid chain; its full sequence is Interleukin-1 beta (268 aa).

Positions 1-116 (MAEVPELASE…TRNNDACVHD (116 aa)) are excised as a propeptide.

It belongs to the IL-1 family. In terms of assembly, monomer. In its precursor form, weakly interacts with full-length MEFV; the mature cytokine does not interact at all. Interacts with integrins ITGAV:ITGBV and ITGA5:ITGB1; integrin-binding is required for IL1B signaling. Interacts with cargo receptor TMED10; the interaction is direct and is required for the secretion of IL1B mature form. Interacts with HSP90AB1; the interaction facilitates cargo translocation into the ERGIC. Interacts with HSP90B1; the interaction facilitates cargo translocation into the ERGIC.

The protein localises to the cytoplasm. The protein resides in the cytosol. It localises to the secreted. Its subcellular location is the lysosome. It is found in the extracellular exosome. In terms of biological role, potent pro-inflammatory cytokine. Initially discovered as the major endogenous pyrogen, induces prostaglandin synthesis, neutrophil influx and activation, T-cell activation and cytokine production, B-cell activation and antibody production, and fibroblast proliferation and collagen production. Promotes Th17 differentiation of T-cells. Synergizes with IL12/interleukin-12 to induce IFNG synthesis from T-helper 1 (Th1) cells. Plays a role in angiogenesis by inducing VEGF production synergistically with TNF and IL6. Involved in transduction of inflammation downstream of pyroptosis: its mature form is specifically released in the extracellular milieu by passing through the gasdermin-D (GSDMD) pore. This Macaca fascicularis (Crab-eating macaque) protein is Interleukin-1 beta (IL1B).